We begin with the raw amino-acid sequence, 432 residues long: MISRPISQQIYSNLNRVIPGGVNSPVRACANMGQIPMIIDHAYRDTLVDVDGKTYVDYCGSWGALIHGHAHPSILEAVQQRMKKGTSFGITTSIEGELAQEVIKLIDSVEKIRFVSSGTEATMSAVRLARGYTNKEFIVKFNGNYHGHADFFLVQAGSGVLEVSPSASSAGIPADIVKQTLCLPYNDIEACRQIFHHSDYRHKIAAIILEPIAGNMGVIPASQEFMQFLRKETLAMGALLIFDEVMTGFRVALKGAQDIYPVEPDLTCFGKIIGGGFPAAAFGGREEIMNLLAPLGSVYQAGTLSGNPIAMEAGLQSLRLIQQPGFYEELHRKTDLLLNPIKETIKKNNWPICIQQAGSMFTLFFCKNRVRNLEDALKANTTIFANFFRKLFDQGIYIPPSQHEAWFISQAHEESNLIKTQSAILTFLEENF.

Lys-271 is subject to N6-(pyridoxal phosphate)lysine.

This sequence belongs to the class-III pyridoxal-phosphate-dependent aminotransferase family. HemL subfamily. Homodimer. Pyridoxal 5'-phosphate serves as cofactor.

The protein localises to the cytoplasm. The enzyme catalyses (S)-4-amino-5-oxopentanoate = 5-aminolevulinate. Its pathway is porphyrin-containing compound metabolism; protoporphyrin-IX biosynthesis; 5-aminolevulinate from L-glutamyl-tRNA(Glu): step 2/2. The sequence is that of Glutamate-1-semialdehyde 2,1-aminomutase from Protochlamydia amoebophila (strain UWE25).